The following is a 204-amino-acid chain: Translation initiation factor 2 subunit beta (204 aa).

The 59-residue stretch at 146–204 (AIEEGKELEVHIESISKKGDGVARIGKYILYVAGTKAGQNVKVRITRISGQVAFTQKIL) folds into the TRAM domain.

This sequence belongs to the eIF-2-beta/eIF-5 family. As to quaternary structure, heterotrimer composed of an alpha, a beta and a gamma chain.

EIF-2 functions in the early steps of protein synthesis by forming a ternary complex with GTP and initiator tRNA. This Methanocorpusculum labreanum (strain ATCC 43576 / DSM 4855 / Z) protein is Translation initiation factor 2 subunit beta.